The following is a 523-amino-acid chain: Sucrose 6(F)-phosphate phosphorylase (523 aa).

Sucrose 6(F)-phosphate is bound by residues Asp-58, His-96, 221–223, Glu-264, 326–327, and Lys-434; these read RLD and HD. Asp-223 (nucleophile) is an active-site residue. The Proton donor/acceptor role is filled by Glu-264.

This sequence belongs to the glycosyl hydrolase 13 family. Sucrose phosphorylase subfamily. Monomer.

It catalyses the reaction sucrose 6(F)-phosphate + phosphate = beta-D-fructose 6-phosphate + alpha-D-glucose 1-phosphate. Catalyzes the reversible phosphorolysis of sucrose 6(F)-phosphate into alpha-D-glucose 1-phosphate (Glc1P) and D-fructose 6-phosphate. May be involved in a new pathway for the degradation of sucrose, which could become phosphorylated on its fructose moiety during uptake via a PTS system. Shows strict specificity since it does not catalyze reactions with alternative substrates. The polypeptide is Sucrose 6(F)-phosphate phosphorylase (Ilumatobacter coccineus (strain NBRC 103263 / KCTC 29153 / YM16-304)).